A 162-amino-acid polypeptide reads, in one-letter code: NADH-ubiquinone oxidoreductase subunit 8 (162 aa).

4Fe-4S ferredoxin-type domains follow at residues 54–83 (RRYQ…IESE) and 93–122 (TRYD…EGPN). Positions 63, 66, 69, 73, 102, 105, 108, and 112 each coordinate [4Fe-4S] cluster.

It belongs to the complex I 23 kDa subunit family. [4Fe-4S] cluster serves as cofactor.

The protein resides in the mitochondrion. The catalysed reaction is a ubiquinone + NADH + 5 H(+)(in) = a ubiquinol + NAD(+) + 4 H(+)(out). Core subunit of the mitochondrial membrane respiratory chain NADH dehydrogenase (Complex I) that is believed to belong to the minimal assembly required for catalysis. Complex I functions in the transfer of electrons from NADH to the respiratory chain. The immediate electron acceptor for the enzyme is believed to be ubiquinone. May donate electrons to ubiquinone. This Reclinomonas americana protein is NADH-ubiquinone oxidoreductase subunit 8 (NAD8).